Here is a 208-residue protein sequence, read N- to C-terminus: ATP phosphoribosyltransferase (208 aa).

This sequence belongs to the ATP phosphoribosyltransferase family. Short subfamily. In terms of assembly, heteromultimer composed of HisG and HisZ subunits.

It localises to the cytoplasm. It catalyses the reaction 1-(5-phospho-beta-D-ribosyl)-ATP + diphosphate = 5-phospho-alpha-D-ribose 1-diphosphate + ATP. The protein operates within amino-acid biosynthesis; L-histidine biosynthesis; L-histidine from 5-phospho-alpha-D-ribose 1-diphosphate: step 1/9. Its function is as follows. Catalyzes the condensation of ATP and 5-phosphoribose 1-diphosphate to form N'-(5'-phosphoribosyl)-ATP (PR-ATP). Has a crucial role in the pathway because the rate of histidine biosynthesis seems to be controlled primarily by regulation of HisG enzymatic activity. This chain is ATP phosphoribosyltransferase, found in Oceanobacillus iheyensis (strain DSM 14371 / CIP 107618 / JCM 11309 / KCTC 3954 / HTE831).